Reading from the N-terminus, the 283-residue chain is Thymidylate synthase (283 aa).

Arg22 is a binding site for dUMP. Cys160 (nucleophile) is an active-site residue. Residues 180 to 183 (RSCD), Asn191, and 221 to 223 (HIY) contribute to the dUMP site. Residue Asp183 coordinates (6R)-5,10-methylene-5,6,7,8-tetrahydrofolate. Residue Ala282 coordinates (6R)-5,10-methylene-5,6,7,8-tetrahydrofolate.

The protein belongs to the thymidylate synthase family. Bacterial-type ThyA subfamily. Homodimer.

The protein localises to the cytoplasm. It carries out the reaction dUMP + (6R)-5,10-methylene-5,6,7,8-tetrahydrofolate = 7,8-dihydrofolate + dTMP. It functions in the pathway pyrimidine metabolism; dTTP biosynthesis. Functionally, catalyzes the reductive methylation of 2'-deoxyuridine-5'-monophosphate (dUMP) to 2'-deoxythymidine-5'-monophosphate (dTMP) while utilizing 5,10-methylenetetrahydrofolate (mTHF) as the methyl donor and reductant in the reaction, yielding dihydrofolate (DHF) as a by-product. This enzymatic reaction provides an intracellular de novo source of dTMP, an essential precursor for DNA biosynthesis. This is Thymidylate synthase from Idiomarina loihiensis (strain ATCC BAA-735 / DSM 15497 / L2-TR).